We begin with the raw amino-acid sequence, 297 residues long: Formiminotransferase cyclodeaminase-like protein (297 aa).

The interval 2–196 (LREMLGCCKV…GVVAVGACGW (195 aa)) is formiminotransferase N-subdomain. H89 functions as the For formimidoyltransferase activity in the catalytic mechanism. 178–187 (GPQEVSKAKG) lines the folate pocket.

The protein belongs to the formiminotransferase family. Expressed constitutively in roots, stems, leaves and flowers.

It localises to the golgi apparatus. Its subcellular location is the trans-Golgi network. It carries out the reaction (6S)-5-formyl-5,6,7,8-tetrahydrofolate + L-glutamate = N-formyl-L-glutamate + (6S)-5,6,7,8-tetrahydrofolate + H(+). It catalyses the reaction 5-formimidoyltetrahydrofolate + L-glutamate = N-formimidoyl-L-glutamate + (6S)-5,6,7,8-tetrahydrofolate. The protein operates within one-carbon metabolism; tetrahydrofolate interconversion. Its function is as follows. Involved in the regulation of root growth. May regulate sorting and/or transportation of trans-Golgi network (TGN) vesicles in root cap peripheral cells, thus influencing the extracellular secretion of mucilage components in the root cap. The sequence is that of Formiminotransferase cyclodeaminase-like protein from Arabidopsis thaliana (Mouse-ear cress).